Here is a 491-residue protein sequence, read N- to C-terminus: Blue-light-activated histidine kinase (491 aa).

Residues 19–92 enclose the PAS 1 domain; the sequence is EANPFTAAVE…EIIHSALEAE (74 aa). Cysteine 69 is modified (S-4a-FMN cysteine). The 55-residue stretch at 93-147 folds into the PAC domain; the sequence is QSVEIDILNYKKSGEPFWNRLHISPVKTENGELHHFVSSQLDVTLELGKLVELEK. The PAS 2 domain maps to 159-230; the sequence is SSDQLQYIVE…QRSQESFATG (72 aa). The interval 286 to 368 is HWE histidine kinase domain; the sequence is EISHRFKNSM…GHRIRTSGPE (83 aa). At histidine 289 the chain carries Phosphohistidine; by autocatalysis.

In terms of processing, FMN binds covalently to cysteine after exposure to blue light and this bond is spontaneously broken in the dark.

It catalyses the reaction ATP + protein L-histidine = ADP + protein N-phospho-L-histidine.. Functionally, photosensitive kinase that is involved in increased bacterial virulence upon exposure to light. The chain is Blue-light-activated histidine kinase from Brucella anthropi (strain ATCC 49188 / DSM 6882 / CCUG 24695 / JCM 21032 / LMG 3331 / NBRC 15819 / NCTC 12168 / Alc 37) (Ochrobactrum anthropi).